Here is a 427-residue protein sequence, read N- to C-terminus: ATP-dependent RNA helicase DDX39A (427 aa).

Residues 1-19 (MAEQDVENELLDYDEDEEP) are compositionally biased toward acidic residues. Residues 1 to 36 (MAEQDVENELLDYDEDEEPQAPQESTPAPPKKDVKG) form a disordered region. A2 carries the N-acetylalanine modification. K31 is covalently cross-linked (Glycyl lysine isopeptide (Lys-Gly) (interchain with G-Cter in SUMO2)). K35 bears the N6-acetyllysine; alternate mark. A Glycyl lysine isopeptide (Lys-Gly) (interchain with G-Cter in SUMO2); alternate cross-link involves residue K35. Residue S37 is modified to Phosphoserine. Residues 44–72 (SGFRDFLLKPELLRAIVDCGFEHPSEVQH) carry the Q motif motif. One can recognise a Helicase ATP-binding domain in the interval 75-248 (IPQAILGMDV…RKFMQDPMEV (174 aa)). Residue 88-95 (AKSGMGKT) coordinates ATP. Residues K154 and K162 each participate in a glycyl lysine isopeptide (Lys-Gly) (interchain with G-Cter in SUMO2) cross-link. Phosphothreonine is present on T171. The short motif at 195-198 (DECD) is the DECD box element. Glycyl lysine isopeptide (Lys-Gly) (interchain with G-Cter in SUMO2) cross-links involve residues K240 and K255. Residues 260 to 421 (GLQQYYVKLK…ELPEEIDIST (162 aa)) enclose the Helicase C-terminal domain. S426 carries the post-translational modification Phosphoserine.

The protein belongs to the DEAD box helicase family. DECD subfamily. In terms of assembly, binds ALYREF/THOC4 and DDX39B/BAT1. Interacts with the apo-AREX complex component SARNP. Interacts with MX1. Interacts with MCM3AP isoform GANP. Interacts with ECD. Interacts with PHAX; this interaction stimulates PHAX RNA binding activity. SUMOylated by RANBP2; SUMOylation modification affects its ability to bind RNA.

The protein localises to the nucleus. It is found in the cytoplasm. It carries out the reaction ATP + H2O = ADP + phosphate + H(+). Functionally, helicase that plays an essential role in mRNA export and is involved in multiple steps in RNA metabolism including alternative splicing. Regulates nuclear mRNA export to the cytoplasm through association with ECD. Also involved in spliceosomal uridine-rich small nuclear RNA (U snRNA) export by stimulating the RNA binding of adapter PHAX. Plays a role in the negative regulation of type I IFN production by increasing the nuclear retention of antiviral transcripts and thus reducing their protein expression. Independently of the interferon pathway, plays an antiviral role against alphaviruses by binding to a 5' conserved sequence element in the viral genomic RNA. This Mus musculus (Mouse) protein is ATP-dependent RNA helicase DDX39A.